We begin with the raw amino-acid sequence, 2822 residues long: MASEVVCGLIFRLLLPICLAVACAFRYNGLSFVYLIYLLLIPLFSEPTKATMQGHTGRLLQSLCITSLSFLLLHIIFHITLASLEAQHRITPAYNCSTWEKTFRQIGFESLKGADAGNGIRVFVPDIGMFIASLTIWLVCRTIVKKPDTEEIAQLNSECENEELAGGEKMDSEEALIYEEDLDGEEGMEGELEESTKLKILRRFASVASKLKEFIGNMITTAGKVVVTILLGSSGMMLPSLTSAVYFFVFLGLCTWWSWCRTFDPLLFGCLCVLLAIFTAGHLIGLYLYQFQFFQEAVPPNDYYARLFGIKSVIQTDCASTWKIIVNPDLSWYHHANPILLLVMYYTLATLIRIWLQEPLVQEEMAKEDEGALDCSSNQNTAERRRSLWYATQYPTDERKLLSMTQDDYKPSDGLLVTVNGNPVDYHTIHPSLPIENGPAKTDLYTTPQYRWEPSEESSEKKEEEEDKREDSEGEGSQEEKRSVRMHAMVAVFQFIMKQSYICALIAMMAWSITYHSWLTFVLLIWSCTLWMIRNRRKYAMISSPFMVVYANLLLVLQYIWSFELPEIKKVPGFLEKKEPGELASKILFTITFWLLLRQHLTEQKALREKEALLSEVKIGSQELEEKEDEELQDVQVEGEPTEKEEEEEEEIKEERHEVKKEEEEEVEEDDDQDIMKVLGNLVVALFIKYWIYVCGGMFFFVSFEGKIVMYKIIYMVLFLFCVALYQVHYEWWRKILKYFWMSVVIYTMLVLIFIYTYQFENFPGLWQNMTGLKKEKLEDLGLKQFTVAELFTRIFIPTSFLLVCILHLHYFHDRFLELTDLKSIPSKEDNTIYSHAKVNGRVYLIINRLAHPEGSLPDLAIMNMTASLDKPEVQKLAESGEERPEECVKKTEKGEAGKDSDESEEEEDEEEESEEEESSDLRNKWHLVIDRLTVLFLKFLEYFHKLQVFMWWILELHIIKIVSSYIIWVTVKEVSLFNYVFLISWAFALPYAKLRRAASSVCTVWTCVIIVCKMLYQLQTIKPENFSVNCSLPNENQTNIPLHELNKSLLYSAPVDPTEWVGLRKSSPLLVYLRNNLLMLAILAFEVTVYRHQEYYRGRNNLTAPVSKTIFHDITRLHLDDGLINCAKYFVNYFFYKFGLETCFLMSVNVIGQRMDFYAMIHACWLIGVLYRRRRKAIAEVWPKYCCFLACIITFQYFVCIGIPPAPCRDYPWRFKGAYFNDNIIKWLYFPDFIVRPNPVFLVYDFMLLLCASLQRQIFEDENKAAVRIMAGDNVEICMNLDAASFSQHNPVPDFIHCRSYLDMSKVIIFSYLFWFVLTIIFITGTTRISIFCMGYLVACFYFLLFGGDLLLKPIKSILRYWDWLIAYNVFVITMKNILSIGACGYIGALVRNSCWLIQAFSLACTVKGYQMPEDDSRCKLPSGEAGIIWDSICFAFLLLQRRVFMSYYFLHVVADIKASQILASRGAELFQATIVKAVKARIEEEKKSMDQLKRQMDRIKARQQKYKKGKERMLSLTQESGEGQDIQKVSEEDDEREADKQKAKGKKKQWWRPWVDHASMVRSGDYYLFETDSEEEEEEELKKEDEEPPRKSAFQFVYQAWITDPKTALRQRRKEKKKLAREEQKERRKGSGDGPVEWEDREDEPVKKKSDGPDNIIKRIFNILKFTWVLFLATVDSFTTWLNSISREHIDISTVLRIERCMLTREIKKGNVPTRESIHMYYQNHIMNLSRESGLDTIDEHSGAGSRAQAAHRMDSLDSRDSISSCYTEATLLISRQSTLDDLDGQDPVPKTSERARPRLRKMFSLDMSSSSADSGSVASSEPTQCTMLYSRQGTTETIEEVEAEAEEEVVEGLEPELHDAEEKEYAAEYEAGVEEISLTPDEELPQFSTDDCEAPPSYSKAVSFEHLSFASQDDSGAKNHMVVSPDDSRTDKLESSILPPLTHELTASDLLMSKMFHDDELEESEKFYVDQPRFLLLFYAMYNTLVARSEMVCYFVIILNHMTSASIITLLLPILIFLWAMLSVPRPSRRFWMMAIVYTEVAIVVKYFFQFGFFPWNKDLEIYKERPYFPPNIIGVEKKEGYVLYDLIQLLALFFHRSILKCHGLWDEDDIVDSNTDKEGSDDELSLDQGRRGSSDSLKSINLAASVESVHVTFPEQPAAIRRKRSCSSSQISPRSSFSSNRSKRGSTSTRNSSQKGSSVLSLKQKSKRELYMEKLQEHLIKAKAFTIKKTLQIYVPIRQFFYDLIHPDYSAVTDVYVLMFLADTVDFIIIVFGFWAFGKHSAAADITSSLSEDQVPGPFLVMVLIQFGTMVVDRALYLRKTVLGKVIFQVILVFGIHFWMFFILPGVTERKFSQNLVAQLWYFVKCVYFGLSAYQIRCGYPTRVLGNFLTKSYNYVNLFLFQGFRLVPFLTELRAVMDWVWTDTTLSLSSWICVEDIYAHIFILKCWRESEKRYPQPRGQKKKKAVKYGMGGMIIVLLICIVWFPLLFMSLIKSVAGVINQPLDVSVTITLGGYQPIFTMSAQQSQLKVMDNSKYNEFLKSFGPNSGAMQFLENYEREDVTVAELEGNSNSLWTISPPSKQKMIQELTDPNSCFSVVFSWSIQRNMTLGAKAEIATDKLSFPLAVATRNSIAKMIAGNDTESSNTPVTIEKIYPYYVKAPSDSNSKPIKQLLSENNFMNITIILFRDNVTKSNSEWWVLNLTGSRIFNQGSQALELVVFNDKVSPPSLGFLAGYGIMGLYASVVLVIGKFVREFFSGISHSIMFEELPNVDRILKLCTDIFLVRETGELELEEDLYAKLIFLYRSPETMIKWTREKTN.

Residues 1–12 (MASEVVCGLIFR) lie on the Cytoplasmic side of the membrane. The helical transmembrane segment at 13-24 (LLLPICLAVACA) threads the bilayer. Residues 25–30 (FRYNGL) lie on the Extracellular side of the membrane. The chain crosses the membrane as a helical span at residues 31-43 (SFVYLIYLLLIPL). Topologically, residues 44-50 (FSEPTKA) are cytoplasmic. Residues 51–76 (TMQGHTGRLLQSLCITSLSFLLLHII) form a helical membrane-spanning segment. The Extracellular portion of the chain corresponds to 77 to 122 (FHITLASLEAQHRITPAYNCSTWEKTFRQIGFESLKGADAGNGIRV). A glycan (N-linked (GlcNAc...) asparagine) is linked at Asn95. Residues 123–141 (FVPDIGMFIASLTIWLVCR) form a helical membrane-spanning segment. Residues 142–221 (TIVKKPDTEE…KEFIGNMITT (80 aa)) lie on the Cytoplasmic side of the membrane. The helical transmembrane segment at 222–237 (AGKVVVTILLGSSGMM) threads the bilayer. Residues 238–240 (LPS) are Extracellular-facing. A helical transmembrane segment spans residues 241 to 258 (LTSAVYFFVFLGLCTWWS). Topologically, residues 259-264 (WCRTFD) are cytoplasmic. A helical membrane pass occupies residues 265–287 (PLLFGCLCVLLAIFTAGHLIGLY). Over 288–335 (LYQFQFFQEAVPPNDYYARLFGIKSVIQTDCASTWKIIVNPDLSWYHH) the chain is Extracellular. A helical transmembrane segment spans residues 336 to 355 (ANPILLLVMYYTLATLIRIW). At 356 to 492 (LQEPLVQEEM…SVRMHAMVAV (137 aa)) the chain is on the cytoplasmic side. Positions 450-481 (YRWEPSEESSEKKEEEEDKREDSEGEGSQEEK) are disordered. Residues 455 to 482 (SEESSEKKEEEEDKREDSEGEGSQEEKR) are a coiled coil. A compositionally biased stretch (acidic residues) spans 463-477 (EEEEDKREDSEGEGS). A helical membrane pass occupies residues 493–514 (FQFIMKQSYICALIAMMAWSIT). The Extracellular segment spans residues 515 to 519 (YHSWL). The chain crosses the membrane as a helical span at residues 520–531 (TFVLLIWSCTLW). The Cytoplasmic portion of the chain corresponds to 532–535 (MIRN). Residues 536 to 562 (RRKYAMISSPFMVVYANLLLVLQYIWS) form a helical membrane-spanning segment. The Extracellular segment spans residues 563–583 (FELPEIKKVPGFLEKKEPGEL). The chain crosses the membrane as a helical span at residues 584–614 (ASKILFTITFWLLLRQHLTEQKALREKEALL). At 615 to 689 (SEVKIGSQEL…GNLVVALFIK (75 aa)) the chain is on the cytoplasmic side. Composition is skewed to acidic residues over residues 624 to 633 (LEEKEDEELQ) and 643 to 652 (EKEEEEEEEI). Residues 624 to 668 (LEEKEDEELQDVQVEGEPTEKEEEEEEEIKEERHEVKKEEEEEVE) are disordered. Basic and acidic residues predominate over residues 653–662 (KEERHEVKKE). A helical transmembrane segment spans residues 690–703 (YWIYVCGGMFFFVS). Over 704 to 709 (FEGKIV) the chain is Extracellular. A helical transmembrane segment spans residues 710–728 (MYKIIYMVLFLFCVALYQV). Residues 729 to 737 (HYEWWRKIL) lie on the Cytoplasmic side of the membrane. A helical membrane pass occupies residues 738 to 757 (KYFWMSVVIYTMLVLIFIYT). Over 758 to 789 (YQFENFPGLWQNMTGLKKEKLEDLGLKQFTVA) the chain is Extracellular. Residues 790 to 811 (ELFTRIFIPTSFLLVCILHLHY) traverse the membrane as a helical segment. Topologically, residues 812–957 (FHDRFLELTD…QVFMWWILEL (146 aa)) are cytoplasmic. Ser856 carries the post-translational modification Phosphoserine. Residues 875–901 (QKLAESGEERPEECVKKTEKGEAGKDS) are compositionally biased toward basic and acidic residues. A disordered region spans residues 875-919 (QKLAESGEERPEECVKKTEKGEAGKDSDESEEEEDEEEESEEEES). Over residues 902–919 (DESEEEEDEEEESEEEES) the composition is skewed to acidic residues. Residues 958–973 (HIIKIVSSYIIWVTVK) form a helical membrane-spanning segment. Residues 974–979 (EVSLFN) are Extracellular-facing. A helical transmembrane segment spans residues 980–989 (YVFLISWAFA). The Cytoplasmic segment spans residues 990 to 997 (LPYAKLRR). A helical membrane pass occupies residues 998–1018 (AASSVCTVWTCVIIVCKMLYQ). Topologically, residues 1019–1074 (LQTIKPENFSVNCSLPNENQTNIPLHELNKSLLYSAPVDPTEWVGLRKSSPLLVYL) are extracellular. Asn1030 carries N-linked (GlcNAc...) asparagine glycosylation. The cysteines at positions 1031 and 1209 are disulfide-linked. Residues 1075 to 1099 (RNNLLMLAILAFEVTVYRHQEYYRG) traverse the membrane as a helical segment. Topologically, residues 1100–1140 (RNNLTAPVSKTIFHDITRLHLDDGLINCAKYFVNYFFYKFG) are cytoplasmic. Residues 1141 to 1155 (LETCFLMSVNVIGQR) traverse the membrane as a helical segment. The Extracellular portion of the chain corresponds to 1156-1157 (MD). The helical transmembrane segment at 1158 to 1171 (FYAMIHACWLIGVL) threads the bilayer. The Cytoplasmic segment spans residues 1172-1182 (YRRRRKAIAEV). The chain crosses the membrane as a helical span at residues 1183 to 1202 (WPKYCCFLACIITFQYFVCI). Residues 1203–1239 (GIPPAPCRDYPWRFKGAYFNDNIIKWLYFPDFIVRPN) lie on the Extracellular side of the membrane. A helical transmembrane segment spans residues 1240 to 1260 (PVFLVYDFMLLLCASLQRQIF). Topologically, residues 1261–1314 (EDENKAAVRIMAGDNVEICMNLDAASFSQHNPVPDFIHCRSYLDMSKVIIFSYL) are cytoplasmic. The chain crosses the membrane as a helical span at residues 1315–1327 (FWFVLTIIFITGT). Residues 1328-1333 (TRISIF) are Extracellular-facing. Residues 1334 to 1346 (CMGYLVACFYFLL) form a helical membrane-spanning segment. The Cytoplasmic portion of the chain corresponds to 1347–1355 (FGGDLLLKP). The chain crosses the membrane as a helical span at residues 1356 to 1381 (IKSILRYWDWLIAYNVFVITMKNILS). Residues 1382–1430 (IGACGYIGALVRNSCWLIQAFSLACTVKGYQMPEDDSRCKLPSGEAGII) lie on the Extracellular side of the membrane. Residues 1431-1447 (WDSICFAFLLLQRRVFM) traverse the membrane as a helical segment. Over 1448-1991 (SYYFLHVVAD…YAMYNTLVAR (544 aa)) the chain is Cytoplasmic. The stretch at 1475–1515 (TIVKAVKARIEEEKKSMDQLKRQMDRIKARQQKYKKGKERM) forms a coiled coil. Disordered stretches follow at residues 1505 to 1551 (QQKY…KKKQ) and 1611 to 1653 (LRQR…KKSD). Residues 1611-1621 (LRQRRKEKKKL) are compositionally biased toward basic residues. A compositionally biased stretch (basic and acidic residues) spans 1622 to 1633 (AREEQKERRKGS). A helical transmembrane segment spans residues 1992 to 2006 (SEMVCYFVIILNHMT). At 2007–2013 (SASIITL) the chain is on the extracellular side. Residues 2014–2025 (LLPILIFLWAML) form a helical membrane-spanning segment. Over 2026–2031 (SVPRPS) the chain is Cytoplasmic. The helical transmembrane segment at 2032 to 2053 (RRFWMMAIVYTEVAIVVKYFFQ) threads the bilayer. Residues 2054–2086 (FGFFPWNKDLEIYKERPYFPPNIIGVEKKEGYV) are Extracellular-facing. Residues 2087-2105 (LYDLIQLLALFFHRSILKC) traverse the membrane as a helical segment. At 2106-2259 (HGLWDEDDIV…HPDYSAVTDV (154 aa)) the chain is on the cytoplasmic side. Disordered regions lie at residues 2120–2139 (DKEGSDDELSLDQGRRGSSD) and 2164–2205 (IRRK…SVLS). Low complexity predominate over residues 2170–2197 (CSSSQISPRSSFSSNRSKRGSTSTRNSS). Residues 2260-2279 (YVLMFLADTVDFIIIVFGFW) traverse the membrane as a helical segment. The Extracellular portion of the chain corresponds to 2280–2301 (AFGKHSAAADITSSLSEDQVPG). Residues 2302-2322 (PFLVMVLIQFGTMVVDRALYL) traverse the membrane as a helical segment. The Cytoplasmic segment spans residues 2323 to 2326 (RKTV). A helical transmembrane segment spans residues 2327–2350 (LGKVIFQVILVFGIHFWMFFILPG). Residues 2351–2359 (VTERKFSQN) lie on the Extracellular side of the membrane. Residues 2360–2382 (LVAQLWYFVKCVYFGLSAYQIRC) traverse the membrane as a helical segment. The Cytoplasmic portion of the chain corresponds to 2383 to 2467 (GYPTRVLGNF…YPQPRGQKKK (85 aa)). The chain crosses the membrane as a helical span at residues 2468 to 2491 (KAVKYGMGGMIIVLLICIVWFPLL). Residues 2492 to 2739 (FMSLIKSVAG…PSLGFLAGYG (248 aa)) are Extracellular-facing. N-linked (GlcNAc...) asparagine glycosylation is present at Asn2692. The chain crosses the membrane as a helical span at residues 2740–2760 (IMGLYASVVLVIGKFVREFFS). The Cytoplasmic portion of the chain corresponds to 2761 to 2822 (GISHSIMFEE…MIKWTREKTN (62 aa)).

It belongs to the PIEZO (TC 1.A.75) family. In terms of assembly, homotrimer; the homotrimer forms a propeller-shaped Piezo channel with a cation-ion conducting pore. Heterotrimeric interaction may occur between PIEZO1 and PIEZO2. Interacts with STOM13. Interacts with TMC7; the interaction inhibits PIEZO2-conducted mechanically activated currents. Interacts with TMC1; the interaction may be part of the MET complex. Interacts with MDFIC (via C-terminus); the interaction prolongs Piezo channel inactivation. Interacts with MDFI (via C-terminus); the interaction prolongs Piezo channel inactivation. Expressed in bladder, colon, and lung, but less abundant in kidney or skin. Strong expression is observed in dorsal root ganglia (DRG) sensory neurons. Expressed in a wide range of cutaneous low-threshold mechanoreceptors (LTMRs), including Merkel cells and Meissner's corpuscles. Expressed in sensory neurons. Expressed in cochlear inner and outer hair cells and vestibular organ hair cells. Expressed in pulmonary neuroepithelial cell bodies. Expressed in bladder urothelium and sensory neurons of the lower urinary tract. Expressed in sensory endings of proprioceptors innervating muscle spindles and Golgi tendon organs.

It localises to the cell membrane. It carries out the reaction Ca(2+)(in) = Ca(2+)(out). Its activity is regulated as follows. Regulated by auxillary subunits MDFIC and MDFI. Channel activity is inhibited by TMEM120aa. Phosphatidic acid and lysophosphatidic acid inhibit Piezo2 channel activity. Pore-forming subunit of the mechanosensitive non-specific cation Piezo channel required for rapidly adapting mechanically activated (MA) currents and has a key role in sensing touch and tactile pain. Piezo channels are homotrimeric three-blade propeller-shaped structures that utilize a cap-motion and plug-and-latch mechanism to gate their ion-conducting pathways. Expressed in sensory neurons, is essential for diverse physiological processes, including respiratory control, systemic metabolism, urinary function, and proprioception. Mediates airway stretch sensing, enabling efficient respiration at birth and maintaining normal breathing in adults. It regulates brown and beige adipose tissue morphology and function, preventing systemic hypermetabolism. In the lower urinary tract, acts as a sensor in both the bladder urothelium and innervating sensory neurons and is required for bladder-stretch sensing and urethral micturition reflexes, ensuring proper urinary function. Additionally, Piezo2 serves as the principal mechanotransducer in proprioceptors, facilitating proprioception and coordinated body movements. In inner ear hair cells, PIEZO1/2 subunits may constitute part of the mechanotransducer (MET) non-selective cation channel complex where they may act as pore-forming ion-conducting component in the complex. Required for Merkel-cell mechanotransduction. Plays a major role in light-touch mechanosensation. This Mus musculus (Mouse) protein is Piezo-type mechanosensitive ion channel component 2.